The following is a 208-amino-acid chain: Outer-membrane lipoprotein carrier protein (208 aa).

The first 22 residues, 1–22 (MKKIFTIAALSLPLFCHLPAMA), serve as a signal peptide directing secretion.

The protein belongs to the LolA family. In terms of assembly, monomer.

It localises to the periplasm. Participates in the translocation of lipoproteins from the inner membrane to the outer membrane. Only forms a complex with a lipoprotein if the residue after the N-terminal Cys is not an aspartate (The Asp acts as a targeting signal to indicate that the lipoprotein should stay in the inner membrane). This Shewanella pealeana (strain ATCC 700345 / ANG-SQ1) protein is Outer-membrane lipoprotein carrier protein.